The following is a 74-amino-acid chain: MAFLKKSVFLVLFLGLVSLSICEEEKREEENEEKQEDDEQSEEKRALWKNMLKGIGKLAGQAALGAVKTLVGAE.

An N-terminal signal peptide occupies residues 1 to 22 (MAFLKKSVFLVLFLGLVSLSIC). Positions 23 to 43 (EEEKREEENEEKQEDDEQSEE) are excised as a propeptide.

In terms of tissue distribution, expressed by the skin glands.

Its subcellular location is the secreted. Functionally, possesses a potent antimicrobial activity against Gram-positive and Gram-negative bacteria. Probably acts by disturbing membrane functions with its amphipathic structure. The polypeptide is Dermaseptin-B3 (Phyllomedusa bicolor (Two-colored leaf frog)).